We begin with the raw amino-acid sequence, 544 residues long: Chaperonin GroEL 2 (544 aa).

Residues 29-32 (TLGP), 86-90 (DGTTT), Gly413, 479-481 (NAA), and Asp495 contribute to the ATP site.

This sequence belongs to the chaperonin (HSP60) family. In terms of assembly, forms a cylinder of 14 subunits composed of two heptameric rings stacked back-to-back. Interacts with the co-chaperonin GroES.

Its subcellular location is the cytoplasm. It carries out the reaction ATP + H2O + a folded polypeptide = ADP + phosphate + an unfolded polypeptide.. Functionally, together with its co-chaperonin GroES, plays an essential role in assisting protein folding. The GroEL-GroES system forms a nano-cage that allows encapsulation of the non-native substrate proteins and provides a physical environment optimized to promote and accelerate protein folding. The sequence is that of Chaperonin GroEL 2 from Prochlorococcus marinus (strain MIT 9313).